The chain runs to 196 residues: MRSKVRWRLCWENELELAEHIELADFFRMTYGPTGPFNAKPFEGSRSWAGARPELRLIAYDANGVAAHLGLLRRFIKIGAIDQLVGELGLYGVRPDLEGLGIGHSVHAMLPVFGELAVPFAFGTVRPALQKHIERFGRYGPVTILSGIRVSSTLPEARLDKPPTRIDDALVIVLPIGRSISDWPAGTVIDRNGPEL.

This sequence belongs to the NodA family.

The protein localises to the cytoplasm. N-acyltransferase required for nodulation. Acts in the production of a small, heat-stable compound (Nod) that stimulates mitosis in various plant protoplasts. This Rhizobium tropici protein is Nodulation protein A (nodA).